Here is a 64-residue protein sequence, read N- to C-terminus: Epidermal growth factor (64 aa).

A signal peptide spans 1-21; sequence MMRHLLLVGAAILIFVSDAQA. Gln-22 carries the post-translational modification Pyrrolidone carboxylic acid. Residues 25–61 enclose the EGF-like domain; it reads GEDPCQIVRCSYGANCIAYGDTAICECPFGYSGIRCQ. Cystine bridges form between Cys-29-Cys-40, Cys-34-Cys-49, and Cys-51-Cys-60.

Albumen gland. Up-regulated in adult CNS after axotomy.

It localises to the secreted. Its function is as follows. Induces neurite outgrowth in specific adult neurons in vitro. The protein is Epidermal growth factor of Lymnaea stagnalis (Great pond snail).